A 143-amino-acid polypeptide reads, in one-letter code: Small ribosomal subunit protein uS11c (143 aa).

The protein belongs to the universal ribosomal protein uS11 family. As to quaternary structure, part of the 30S ribosomal subunit.

It localises to the plastid. It is found in the chloroplast. The chain is Small ribosomal subunit protein uS11c from Cenchrus americanus (Pearl millet).